Here is a 236-residue protein sequence, read N- to C-terminus: Carbonyl reductase family member 4 (236 aa).

Residues 11–14, 34–35, Asp55, and 82–84 contribute to the NADP(+) site; these read SRGI, RN, and SAG. Ser134 lines the substrate pocket. NADP(+) is bound by residues Tyr147, Lys151, and 180–182; that span reads IRT. Residue Tyr147 is the Proton acceptor of the active site.

Belongs to the short-chain dehydrogenases/reductases (SDR) family. In terms of assembly, homotetramer (in vitro). Heterotetramer with HSD17B8; contains two molecules each of HSD17B8 and CBR4.

The protein resides in the mitochondrion matrix. It participates in lipid metabolism; fatty acid biosynthesis. The heterotetramer with HSD17B8 has NADH-dependent 3-ketoacyl-acyl carrier protein reductase activity, and thereby plays a role in mitochondrial fatty acid biosynthesis. Within the heterotetramer, HSD17B8 binds NADH; CBR4 binds NADPD. The homotetramer has NADPH-dependent quinone reductase activity. Both homotetramer and the heterotetramer have broad in vitro substrate specificity and can reduce 9,10-phenanthrenequinone, 1,4-benzoquinone and various other o-quinones and p-quinones. In Xenopus laevis (African clawed frog), this protein is Carbonyl reductase family member 4 (cbr4).